The following is a 660-amino-acid chain: Zeaxanthin epoxidase, chloroplastic (660 aa).

The transit peptide at M1–K49 directs the protein to the chloroplast. Residues K79–E107 and T357–D370 contribute to the FAD site. The FHA domain maps to L545 to G609.

FAD serves as cofactor.

It is found in the plastid. The protein localises to the chloroplast membrane. The protein resides in the chloroplast thylakoid membrane. The catalysed reaction is all-trans-zeaxanthin + 4 reduced [2Fe-2S]-[ferredoxin] + 2 O2 + 4 H(+) = all-trans-violaxanthin + 4 oxidized [2Fe-2S]-[ferredoxin] + 2 H2O. It carries out the reaction all-trans-zeaxanthin + 2 reduced [2Fe-2S]-[ferredoxin] + O2 + 2 H(+) = all-trans-antheraxanthin + 2 oxidized [2Fe-2S]-[ferredoxin] + H2O. The enzyme catalyses all-trans-antheraxanthin + 2 reduced [2Fe-2S]-[ferredoxin] + O2 + 2 H(+) = all-trans-violaxanthin + 2 oxidized [2Fe-2S]-[ferredoxin] + H2O. It catalyses the reaction beta-cryptoxanthin + 2 reduced [2Fe-2S]-[ferredoxin] + O2 + 2 H(+) = (5R,6S)-5,6-epoxi-beta-cryptoxanthin + 2 oxidized [2Fe-2S]-[ferredoxin] + H2O. The protein operates within plant hormone biosynthesis; abscisate biosynthesis. Functionally, converts zeaxanthin into antheraxanthin and subsequently violaxanthin. Also acts on beta-cryptoxanthin. Involved in the epoxidation of zeaxanthin. In Capsicum annuum (Capsicum pepper), this protein is Zeaxanthin epoxidase, chloroplastic.